Here is a 459-residue protein sequence, read N- to C-terminus: Phosphoglucosamine mutase (459 aa).

Catalysis depends on Ser100, which acts as the Phosphoserine intermediate. Mg(2+)-binding residues include Ser100, Asp256, Asp258, and Asp260. Ser100 is subject to Phosphoserine.

It belongs to the phosphohexose mutase family. Mg(2+) is required as a cofactor. In terms of processing, activated by phosphorylation.

The enzyme catalyses alpha-D-glucosamine 1-phosphate = D-glucosamine 6-phosphate. In terms of biological role, catalyzes the conversion of glucosamine-6-phosphate to glucosamine-1-phosphate. The chain is Phosphoglucosamine mutase from Heliobacterium modesticaldum (strain ATCC 51547 / Ice1).